We begin with the raw amino-acid sequence, 167 residues long: Putative pre-16S rRNA nuclease (167 aa).

Residues 1-24 form a disordered region; that stretch reads MVLTQHRVPDRPGDPDQDPGRGRR. Residues 7 to 21 are compositionally biased toward basic and acidic residues; it reads RVPDRPGDPDQDPGR.

This sequence belongs to the YqgF nuclease family.

The protein resides in the cytoplasm. Its function is as follows. Could be a nuclease involved in processing of the 5'-end of pre-16S rRNA. This is Putative pre-16S rRNA nuclease from Mycolicibacterium paratuberculosis (strain ATCC BAA-968 / K-10) (Mycobacterium paratuberculosis).